A 273-amino-acid chain; its full sequence is Ribosomal RNA small subunit methyltransferase I (273 aa).

Belongs to the methyltransferase superfamily. RsmI family.

It is found in the cytoplasm. The catalysed reaction is cytidine(1402) in 16S rRNA + S-adenosyl-L-methionine = 2'-O-methylcytidine(1402) in 16S rRNA + S-adenosyl-L-homocysteine + H(+). Its function is as follows. Catalyzes the 2'-O-methylation of the ribose of cytidine 1402 (C1402) in 16S rRNA. The protein is Ribosomal RNA small subunit methyltransferase I of Xylella fastidiosa (strain 9a5c).